The sequence spans 516 residues: Arginyl-tRNA--protein transferase 1 (516 aa).

The segment covering 150 to 180 (IESEEKEKEKSIKKEGSKEFIHPQSIEEKLG) has biased composition (basic and acidic residues). Residues 150-206 (IESEEKEKEKSIKKEGSKEFIHPQSIEEKLGSGEPSHPIKVHIGPKPGKGADLSKPP) form a disordered region.

Belongs to the R-transferase family. As to quaternary structure, monomer. Interacts with LIAT1; LIAT1 is not a substrate of ATE1, the interaction takes place in the cytoplasm and seems to increase ATE1 arginyltransferase activity. Interacts with LIAT1; has a higher affinity than the other isoforms. In terms of tissue distribution, widely expressed.

The protein resides in the nucleus. It is found in the cytoplasm. It catalyses the reaction an N-terminal L-alpha-aminoacyl-[protein] + L-arginyl-tRNA(Arg) = an N-terminal L-arginyl-L-aminoacyl-[protein] + tRNA(Arg) + H(+). Functionally, involved in the post-translational conjugation of arginine to the N-terminal aspartate or glutamate of a protein. This arginylation is required for degradation of the protein via the ubiquitin pathway. Does not arginylate cysteine residues. This is Arginyl-tRNA--protein transferase 1 from Mus musculus (Mouse).